We begin with the raw amino-acid sequence, 332 residues long: Adenosine deaminase (332 aa).

Residues histidine 12 and histidine 14 each coordinate Zn(2+). The substrate site is built by histidine 14, aspartate 16, and glycine 170. Zn(2+) is bound at residue histidine 197. Glutamate 200 serves as the catalytic Proton donor. Position 278 (aspartate 278) interacts with Zn(2+). Aspartate 279 lines the substrate pocket.

Belongs to the metallo-dependent hydrolases superfamily. Adenosine and AMP deaminases family. Adenosine deaminase subfamily. The cofactor is Zn(2+).

The enzyme catalyses adenosine + H2O + H(+) = inosine + NH4(+). It carries out the reaction 2'-deoxyadenosine + H2O + H(+) = 2'-deoxyinosine + NH4(+). Its function is as follows. Catalyzes the hydrolytic deamination of adenosine and 2-deoxyadenosine. The protein is Adenosine deaminase of Serratia proteamaculans (strain 568).